Reading from the N-terminus, the 23-residue chain is Brevinin-1Eb (23 aa).

C17 and C23 form a disulfide bridge.

The protein belongs to the frog skin active peptide (FSAP) family. Brevinin subfamily. In terms of tissue distribution, expressed by the skin glands.

Its subcellular location is the secreted. In terms of biological role, shows antibacterial activity against representative Gram-negative and Gram-positive bacterial species, and a very high hemolytic activity. The polypeptide is Brevinin-1Eb (Pelophylax lessonae (Pool frog)).